The primary structure comprises 80 residues: Small ribosomal subunit protein bS18 (80 aa).

This sequence belongs to the bacterial ribosomal protein bS18 family. As to quaternary structure, part of the 30S ribosomal subunit. Forms a tight heterodimer with protein bS6.

Binds as a heterodimer with protein bS6 to the central domain of the 16S rRNA, where it helps stabilize the platform of the 30S subunit. This chain is Small ribosomal subunit protein bS18, found in Staphylococcus saprophyticus subsp. saprophyticus (strain ATCC 15305 / DSM 20229 / NCIMB 8711 / NCTC 7292 / S-41).